Consider the following 146-residue polypeptide: MLSQEFFNSFITIYRPYLKLTEPILEKHNIYYGQWLILRDIAKHQPTTLIEISHRRAIEKPTARKTLKALIENDLITVENSLEDKRQKFLTLTPKGHELYEIVCLDVQKLQQAVVAKTNISQDQMQETINVMNQIHEILLKEAHND.

An HTH marR-type domain is found at 1–137; it reads MLSQEFFNSF…TINVMNQIHE (137 aa).

This is an uncharacterized protein from Staphylococcus aureus (strain MRSA252).